The sequence spans 136 residues: uncharacterized protein (136 aa).

The chain crosses the membrane as a helical span at residues 7-27; that stretch reads ANVLAILLVSLFLINGLVFLS.

It localises to the membrane. This is an uncharacterized protein from Mycoplasma pneumoniae (strain ATCC 29342 / M129 / Subtype 1) (Mycoplasmoides pneumoniae).